Consider the following 305-residue polypeptide: tRNA dimethylallyltransferase (305 aa).

8 to 15 lines the ATP pocket; it reads GPTGTGKS. Position 10–15 (10–15) interacts with substrate; it reads TGTGKS.

Belongs to the IPP transferase family. Monomer. The cofactor is Mg(2+).

It carries out the reaction adenosine(37) in tRNA + dimethylallyl diphosphate = N(6)-dimethylallyladenosine(37) in tRNA + diphosphate. Functionally, catalyzes the transfer of a dimethylallyl group onto the adenine at position 37 in tRNAs that read codons beginning with uridine, leading to the formation of N6-(dimethylallyl)adenosine (i(6)A). The polypeptide is tRNA dimethylallyltransferase (Mycobacterium sp. (strain JLS)).